Here is a 297-residue protein sequence, read N- to C-terminus: Guanylate kinase (297 aa).

One can recognise a Guanylate kinase-like domain in the interval 4–183; that stretch reads GKMIIISGPS…AVAKITDVLH (180 aa). Position 11 to 18 (11 to 18) interacts with ATP; it reads GPSGVGKG. Residues 204–297 form a unknown region; the sequence is EQIVKEKYMY…EQKHYNNDEF (94 aa).

The protein belongs to the guanylate kinase family.

It localises to the cytoplasm. It catalyses the reaction GMP + ATP = GDP + ADP. Its function is as follows. Essential for recycling GMP and indirectly, cGMP. The chain is Guanylate kinase (gmk) from Mycoplasma mycoides subsp. mycoides SC (strain CCUG 32753 / NCTC 10114 / PG1).